The chain runs to 150 residues: D-aminoacyl-tRNA deacylase (150 aa).

The short motif at 138-139 (GP) is the Gly-cisPro motif, important for rejection of L-amino acids element.

The protein belongs to the DTD family. As to quaternary structure, homodimer.

The protein localises to the cytoplasm. The enzyme catalyses glycyl-tRNA(Ala) + H2O = tRNA(Ala) + glycine + H(+). The catalysed reaction is a D-aminoacyl-tRNA + H2O = a tRNA + a D-alpha-amino acid + H(+). An aminoacyl-tRNA editing enzyme that deacylates mischarged D-aminoacyl-tRNAs. Also deacylates mischarged glycyl-tRNA(Ala), protecting cells against glycine mischarging by AlaRS. Acts via tRNA-based rather than protein-based catalysis; rejects L-amino acids rather than detecting D-amino acids in the active site. By recycling D-aminoacyl-tRNA to D-amino acids and free tRNA molecules, this enzyme counteracts the toxicity associated with the formation of D-aminoacyl-tRNA entities in vivo and helps enforce protein L-homochirality. In Petrotoga mobilis (strain DSM 10674 / SJ95), this protein is D-aminoacyl-tRNA deacylase.